We begin with the raw amino-acid sequence, 160 residues long: MSGAVCPGSFDPVTLGHIDIFERAAAQFDEVVVAVMVNPNKTGMFTHEERIALIEESTTHLPNLRVESGQGLIVDFVKARGLTAIVKGLRTGTDFEYELQMAQMNNHIAGVDTFFIATTPRYSFVSSSLAKEVATLGGDVSELLPAPVNARLKAKLAARD.

S9 provides a ligand contact to substrate. ATP is bound by residues S9–F10 and H17. Positions 41, 73, and 87 each coordinate substrate. Residues G88–R90, E98, and Y122–S128 contribute to the ATP site.

The protein belongs to the bacterial CoaD family. Homohexamer. Mg(2+) serves as cofactor.

It is found in the cytoplasm. It carries out the reaction (R)-4'-phosphopantetheine + ATP + H(+) = 3'-dephospho-CoA + diphosphate. It functions in the pathway cofactor biosynthesis; coenzyme A biosynthesis; CoA from (R)-pantothenate: step 4/5. Its function is as follows. Reversibly transfers an adenylyl group from ATP to 4'-phosphopantetheine, yielding dephospho-CoA (dPCoA) and pyrophosphate. The protein is Phosphopantetheine adenylyltransferase of Mycolicibacterium vanbaalenii (strain DSM 7251 / JCM 13017 / BCRC 16820 / KCTC 9966 / NRRL B-24157 / PYR-1) (Mycobacterium vanbaalenii).